A 347-amino-acid polypeptide reads, in one-letter code: NADH-quinone oxidoreductase subunit H (347 aa).

The next 9 helical transmembrane spans lie at 13–33 (LIIALKSVVLLVVLLIVVAYL), 50–70 (PNVVGPWGLFQAFADLLKFVF), 82–102 (GVFLLAPFISAVLAMATWAVI), 115–135 (VGILYIFAISSLEVYGVIMGG), 161–181 (IGFVIVTVLLTVGSLNLTDIV), 198–218 (FLDWNWLCLFPMFVVFFISAL), 248–268 (FLLFFLGEYVAITLMCALMTV), 286–306 (VPGIIWFMLKLCFCFFLFAMV), and 325–345 (VFLPISLFMVVATATFLKVFG).

Belongs to the complex I subunit 1 family. In terms of assembly, NDH-1 is composed of 14 different subunits. Subunits NuoA, H, J, K, L, M, N constitute the membrane sector of the complex.

Its subcellular location is the cell inner membrane. The catalysed reaction is a quinone + NADH + 5 H(+)(in) = a quinol + NAD(+) + 4 H(+)(out). Functionally, NDH-1 shuttles electrons from NADH, via FMN and iron-sulfur (Fe-S) centers, to quinones in the respiratory chain. The immediate electron acceptor for the enzyme in this species is believed to be ubiquinone. Couples the redox reaction to proton translocation (for every two electrons transferred, four hydrogen ions are translocated across the cytoplasmic membrane), and thus conserves the redox energy in a proton gradient. This subunit may bind ubiquinone. This is NADH-quinone oxidoreductase subunit H from Brucella abortus (strain 2308).